The chain runs to 376 residues: Erythronate-4-phosphate dehydrogenase (376 aa).

Substrate contacts are provided by serine 45 and threonine 67. NAD(+) is bound by residues 127–128 (QV), aspartate 147, and threonine 176. Arginine 209 is a catalytic residue. Residue aspartate 233 participates in NAD(+) binding. Residue glutamate 238 is part of the active site. Histidine 255 acts as the Proton donor in catalysis. Glycine 258 provides a ligand contact to NAD(+). Residue tyrosine 259 coordinates substrate.

This sequence belongs to the D-isomer specific 2-hydroxyacid dehydrogenase family. PdxB subfamily. In terms of assembly, homodimer.

The protein resides in the cytoplasm. It catalyses the reaction 4-phospho-D-erythronate + NAD(+) = (R)-3-hydroxy-2-oxo-4-phosphooxybutanoate + NADH + H(+). The protein operates within cofactor biosynthesis; pyridoxine 5'-phosphate biosynthesis; pyridoxine 5'-phosphate from D-erythrose 4-phosphate: step 2/5. Its function is as follows. Catalyzes the oxidation of erythronate-4-phosphate to 3-hydroxy-2-oxo-4-phosphonooxybutanoate. The chain is Erythronate-4-phosphate dehydrogenase from Aliivibrio salmonicida (strain LFI1238) (Vibrio salmonicida (strain LFI1238)).